The chain runs to 313 residues: MIIVTGGAGMIGSNIVKSLNNKGFNDILVVDNLKDGKKFKNLVDLDITDYMDKEDFITQIMAGDDFGPIEAIFHEGACSATTEWDGKYIMMNNYEYSKELLHFCIEREIPFLYASSAATYGETDTFIEERAYEGALNVYGYSKQQFDNYVRRLWADAEEHNETLSQITGFRYFNVYGPREQHKGSMASVAFHLNNQMNAGDNPKLFEGSDEFKRDFVYVGDVAAVNLWFLENGVSGIYNCGTGRAEPFRAVAEAVIKHHGKGEVETIPFPEHLKGAYQEFTQADLTKLRAAGCDVEFKSVADGVAEYMAMINK.

NADP(+) contacts are provided by residues Met-10 to Ile-11, Asp-31 to Asn-32, Lys-38, Lys-53, Glu-75 to Ser-79, and Asn-92. The active-site Proton acceptor is Tyr-139. Lys-143 contacts NADP(+). Substrate is bound at residue Asn-174. Residues Val-175 and Lys-183 each coordinate NADP(+). The Proton acceptor role is filled by Lys-183. Substrate-binding positions include Ser-185, His-192, Phe-206–Ser-209, Arg-214, and Tyr-277.

It belongs to the NAD(P)-dependent epimerase/dehydratase family. HldD subfamily. Homopentamer. Requires NADP(+) as cofactor.

The enzyme catalyses ADP-D-glycero-beta-D-manno-heptose = ADP-L-glycero-beta-D-manno-heptose. Its pathway is nucleotide-sugar biosynthesis; ADP-L-glycero-beta-D-manno-heptose biosynthesis; ADP-L-glycero-beta-D-manno-heptose from D-glycero-beta-D-manno-heptose 7-phosphate: step 4/4. Its function is as follows. Catalyzes the interconversion between ADP-D-glycero-beta-D-manno-heptose and ADP-L-glycero-beta-D-manno-heptose via an epimerization at carbon 6 of the heptose. This Aliivibrio fischeri (strain ATCC 700601 / ES114) (Vibrio fischeri) protein is ADP-L-glycero-D-manno-heptose-6-epimerase.